Reading from the N-terminus, the 326-residue chain is Pyruvate dehydrogenase E1 component subunit alpha (326 aa).

As to quaternary structure, heterodimer of an alpha and a beta chain. The cofactor is thiamine diphosphate.

It catalyses the reaction N(6)-[(R)-lipoyl]-L-lysyl-[protein] + pyruvate + H(+) = N(6)-[(R)-S(8)-acetyldihydrolipoyl]-L-lysyl-[protein] + CO2. Functionally, the pyruvate dehydrogenase complex catalyzes the overall conversion of pyruvate to acetyl-CoA and CO(2). It contains multiple copies of three enzymatic components: pyruvate dehydrogenase (E1), dihydrolipoamide acetyltransferase (E2) and lipoamide dehydrogenase (E3). The chain is Pyruvate dehydrogenase E1 component subunit alpha (pdhA) from Rickettsia prowazekii (strain Madrid E).